We begin with the raw amino-acid sequence, 252 residues long: uncharacterized protein (252 aa).

It belongs to the LarE family.

This is an uncharacterized protein from Methanocaldococcus jannaschii (strain ATCC 43067 / DSM 2661 / JAL-1 / JCM 10045 / NBRC 100440) (Methanococcus jannaschii).